The following is a 482-amino-acid chain: Nucleoside triphosphate pyrophosphatase/Nudix hydrolase fusion protein (482 aa).

Residues 1–299 (MSIPLILASK…DLWNVGRGEL (299 aa)) form a maf-like region. The Proton acceptor role is filled by Asp167. The 138-residue stretch at 338-475 (GTNGASGILL…TDWPRFAARL (138 aa)) folds into the Nudix hydrolase domain.

In the N-terminal section; belongs to the Maf family. A divalent metal cation is required as a cofactor.

Its subcellular location is the cytoplasm. The catalysed reaction is a ribonucleoside 5'-triphosphate + H2O = a ribonucleoside 5'-phosphate + diphosphate + H(+). It carries out the reaction a 2'-deoxyribonucleoside 5'-triphosphate + H2O = a 2'-deoxyribonucleoside 5'-phosphate + diphosphate + H(+). Nucleoside triphosphate pyrophosphatase. May have a dual role in cell division arrest and in preventing the incorporation of modified nucleotides into cellular nucleic acids. The polypeptide is Nucleoside triphosphate pyrophosphatase/Nudix hydrolase fusion protein (Bifidobacterium longum (strain NCC 2705)).